Reading from the N-terminus, the 4454-residue chain is E3 ubiquitin-protein ligase HUWE1 (4454 aa).

Residues 521–575 (RASSSNSSTSISGPGPGPGPGPGPGPGPGPGPGPGPGLGPSLGPGPGPGPRPGVQ) form a disordered region. Residues 523 to 533 (SSSNSSTSISG) are compositionally biased toward low complexity. The segment covering 535–571 (GPGPGPGPGPGPGPGPGPGPGPGLGPSLGPGPGPGPR) has biased composition (pro residues). 2 positions are modified to phosphoserine: Ser724 and Ser725. Disordered regions lie at residues 781–834 (QKAD…VVGT), 1054–1077 (DEKA…AGSM), and 1094–1114 (TLAP…KSKI). Positions 801 to 811 (ASSEDEEEEEV) are enriched in acidic residues. Over residues 813-832 (AMQSFNSAQQNETEPNQQVV) the composition is skewed to polar residues. Ser816 carries the phosphoserine modification. Phosphoserine is present on Ser1160. Positions 1367–1378 (LSKEKEGSRGEE) are enriched in basic and acidic residues. The tract at residues 1367–1396 (LSKEKEGSRGEEEAGQEEGGSRREPQVNQQ) is disordered. The region spanning 1392–1431 (QVNQQQLQQLMDMGFTREHAMEALLNTSTMEQATEYLLTH) is the UBA domain. Residues Ser1444, Ser1446, Ser1458, and Ser1471 each carry the phosphoserine modification. The UIM domain occupies 1446–1465 (SEEDQMMRAIAMSLGQDIPM). The segment at 1472–1491 (PEEVACRKEEEERKAREKQE) is disordered. Residues 1679 to 1756 (RAQMTKYLQS…ETGNRRPVML (78 aa)) form the WWE domain. Residues 1766-1802 (KNSKSSNGQELEKTLEESKETDIKRKENKGNDIPLAL) form a disordered region. Over residues 1775 to 1795 (ELEKTLEESKETDIKRKENKG) the composition is skewed to basic and acidic residues. Ser1983 is modified (phosphoserine). 3 disordered regions span residues 2095–2142 (APAE…SKPL), 2339–2420 (SLFG…QEMQ), and 2433–2556 (LERD…ASPL). The span at 2097–2112 (AETSTTGTSQGEGAST) shows a compositional bias: low complexity. Thr2112 carries the phosphothreonine modification. The span at 2114 to 2134 (EETREGKKDKEGDRTSEEGKQ) shows a compositional bias: basic and acidic residues. Residues 2339 to 2368 (SLFGSKSASSKSKSEQDAQGASQDSSSHQQ) show a composition bias toward low complexity. A Phosphoserine modification is found at Ser2343. Lys2344 is modified (N6-acetyllysine). Acidic residues-rich tracts occupy residues 2372–2383 (EPGEAEVQEEDH) and 2391–2402 (ADGDIMDGEAET). A phosphoserine mark is found at Ser2439, Ser2442, and Ser2468. Over residues 2465–2475 (SNLSQASTLQA) the composition is skewed to polar residues. The segment covering 2485 to 2549 (DPEDEEEHTQ…SEMELDEDYP (65 aa)) has biased composition (acidic residues). Phosphoserine is present on residues Ser2604, Ser2609, and Ser2612. Position 2631 is a phosphothreonine (Thr2631). 3 positions are modified to phosphoserine: Ser2661, Ser2672, and Ser2696. The span at 2781–2793 (IIDKGKEDKENRD) shows a compositional bias: basic and acidic residues. 2 disordered regions span residues 2781–3047 (IIDK…GVDP) and 3113–3136 (QQRA…MDPV). Residues 2794 to 2813 (QSAQCTVSKTNDSTEQNVSD) are compositionally biased toward polar residues. Low complexity predominate over residues 2815-2849 (TPMPDSYPTTPSSTDAPTSESKETLGTLQPSQQQP). Thr2828 bears the Phosphothreonine mark. Polar residues-rich tracts occupy residues 2895–2912 (AETT…TSLS), 2924–2941 (AVSS…SLAS), and 2954–2967 (AGSS…SSTP). Phosphoserine occurs at positions 2903, 2910, 2912, 2938, 2964, and 2965. Phosphothreonine is present on Thr2966. Low complexity predominate over residues 2990–3009 (PPEDSSPPASSESSSTRDSA). Residue Ser2995 is modified to Phosphoserine. Phosphoserine is present on residues Ser3193, Ser3194, Ser3199, Ser3204, and Ser3212. Residue Arg3226 is modified to Omega-N-methylarginine. Disordered stretches follow at residues 3320 to 3343 (PKLS…SHEN), 3431 to 3458 (QRTK…SQSS), 3482 to 3501 (GKNS…ETSL), 3548 to 3590 (SEVQ…TTPV), and 3615 to 3642 (TPTT…EGGS). Basic and acidic residues predominate over residues 3432-3446 (RTKETNCESDRERGS). Low complexity predominate over residues 3447–3458 (KQACSPCSSQSS). Low complexity-rich tracts occupy residues 3552-3579 (TNSS…ATAP) and 3615-3628 (TPTT…TSTT). Phosphoserine is present on residues Ser3633, Ser3740, Ser3830, Ser3835, Ser3837, and Ser3838. A disordered region spans residues 3815-3836 (TRRANKKAKQTGRLGSSGLGSA). Over residues 3826 to 3836 (GRLGSSGLGSA) the composition is skewed to low complexity. Disordered stretches follow at residues 3859 to 3927 (EGQR…LPLL) and 3974 to 4028 (RESK…SSSL). The span at 3871 to 3880 (TSESSNQSET) shows a compositional bias: polar residues. 3 positions are modified to phosphoserine: Ser3887, Ser3895, and Ser3907. Over residues 3894 to 3905 (PSPSAQDTQSIV) the composition is skewed to polar residues. Position 3910 is a phosphothreonine (Thr3910). Basic and acidic residues-rich tracts occupy residues 3913-3922 (GEKEKEERPP) and 3974-3995 (RESK…KDEP). Residues Ser3986 and Ser3999 each carry the phosphoserine modification. The span at 3996 to 4005 (PPLSPAPLTP) shows a compositional bias: pro residues. Phosphothreonine is present on residues Thr4004 and Thr4007. The span at 4018–4028 (EPSSMHISSSL) shows a compositional bias: polar residues. The HECT domain occupies 4118 to 4454 (SPEEMKNRLY…QECSEGFGLA (337 aa)). Position 4351 is a phosphotyrosine (Tyr4351). The Glycyl thioester intermediate role is filled by Cys4421.

It belongs to the UPL family. TOM1/PTR1 subfamily. As to quaternary structure, interacts with isoform p14ARF of CDKN2A which strongly inhibits HUWE1 ubiquitin ligase activity. Interacts with MYCN, POLB and CDC6. Interacts with isoform 2 of PA2G4. Interacts with NR1D1. Interacts with AMBRA1. Interacts with HAPSTR1. Interacts with HAPSTR2. In hepatocytes, interacts with PAQR3; the interaction promotes PPARA poylubiquitination and STUB1-mediated degradation. In terms of processing, phosphorylated on tyrosine, phosphorylation is probably required for its ability to inhibit TP53 transactivation. Widely expressed.

The protein localises to the cytoplasm. It is found in the nucleus. Its subcellular location is the mitochondrion. The enzyme catalyses S-ubiquitinyl-[E2 ubiquitin-conjugating enzyme]-L-cysteine + [acceptor protein]-L-lysine = [E2 ubiquitin-conjugating enzyme]-L-cysteine + N(6)-ubiquitinyl-[acceptor protein]-L-lysine.. Its pathway is protein modification; protein ubiquitination. Its function is as follows. E3 ubiquitin-protein ligase which mediates ubiquitination and subsequent proteasomal degradation of target proteins. Regulates apoptosis by catalyzing the polyubiquitination and degradation of MCL1. Mediates monoubiquitination of DNA polymerase beta (POLB) at 'Lys-41', 'Lys-61' and 'Lys-81', thereby playing a role in base-excision repair. Also ubiquitinates the p53/TP53 tumor suppressor and core histones including H1, H2A, H2B, H3 and H4. Ubiquitinates MFN2 to negatively regulate mitochondrial fusion in response to decreased stearoylation of TFRC. Ubiquitination of MFN2 also takes place following induction of mitophagy; AMBRA1 acts as a cofactor for HUWE1-mediated ubiquitination. Regulates neural differentiation and proliferation by catalyzing the polyubiquitination and degradation of MYCN. May regulate abundance of CDC6 after DNA damage by polyubiquitinating and targeting CDC6 to degradation. Mediates polyubiquitination of PA2G4. Acts in concert with MYCBP2 to regulate the circadian clock gene expression by promoting the lithium-induced ubiquination and degradation of NR1D1. Binds to an upstream initiator-like sequence in the preprodynorphin gene. Mediates HAPSTR1 degradation, but is also a required cofactor in the pathway by which HAPSTR1 governs stress signaling. Acts as a regulator of the JNK and NF-kappa-B signaling pathways by mediating assembly of heterotypic 'Lys-63'-/'Lys-48'-linked branched ubiquitin chains that are then recognized by TAB2: HUWE1 mediates branching of 'Lys-48'-linked chains of substrates initially modified with 'Lys-63'-linked conjugates by TRAF6. 'Lys-63'-/'Lys-48'-linked branched ubiquitin chains protect 'Lys-63'-linkages from CYLD deubiquitination. Ubiquitinates PPARA in hepatocytes. The protein is E3 ubiquitin-protein ligase HUWE1 (Huwe1) of Rattus norvegicus (Rat).